The sequence spans 268 residues: Deoxyuridine 5'-triphosphate nucleotidohydrolase (268 aa).

Substrate-binding positions include 172–174 and 263–264; these read RSS and FG.

This sequence belongs to the dUTPase family. The cofactor is Mg(2+).

It catalyses the reaction dUTP + H2O = dUMP + diphosphate + H(+). In terms of biological role, involved in nucleotide metabolism: produces dUMP, the immediate precursor of thymidine nucleotides and decreases the intracellular concentration of dUTP to avoid uracil incorporation into viral DNA. The chain is Deoxyuridine 5'-triphosphate nucleotidohydrolase from Suid herpesvirus 1 (strain Kaplan) (SuHV-1).